The chain runs to 651 residues: Probable potassium transport system protein Kup 3 (651 aa).

The next 12 helical transmembrane spans lie at 38–58, 77–97, 129–149, 166–186, 197–217, 242–262, 276–296, 314–334, 366–386, 396–416, 421–441, and 448–468; these read FWAL…TSPL, VLVL…VTAK, LFLL…SMIT, PALE…LFGV, FFGP…AMHI, IGLV…ALYA, WLGF…ALVL, LVLP…QAVI, IYLP…VLLF, YGIA…VVIW, WSWP…AMFF, and LLDG…VIWT.

The protein belongs to the HAK/KUP transporter (TC 2.A.72) family.

It is found in the cell inner membrane. The enzyme catalyses K(+)(in) + H(+)(in) = K(+)(out) + H(+)(out). Its function is as follows. Transport of potassium into the cell. Likely operates as a K(+):H(+) symporter. This Rhodopseudomonas palustris (strain ATCC BAA-98 / CGA009) protein is Probable potassium transport system protein Kup 3.